The chain runs to 591 residues: Calnexin (591 aa).

A signal peptide spans 1-20 (MEGKWLLCLLLVLGTAAVEA). The Lumenal segment spans residues 21-482 (HDGHDDDAID…QMLEAAEERP (462 aa)). Ca(2+) contacts are provided by S75 and D118. At K138 the chain carries N6-acetyllysine. Residues C161 and C195 are joined by a disulfide bond. An alpha-D-glucoside contacts are provided by Y165, K167, Y186, and D193. Positions 261 to 347 (GNLLNDMTPP…EKPEDWDEDM (87 aa)) are disordered. The segment covering 275–320 (REIEDPEDRKPEDWDERPKIADPDAVKPDDWDEDAPSKIPDEEATK) has biased composition (basic and acidic residues). The segment at 277-410 (IEDPEDRKPE…RKIPNPDFFE (134 aa)) is p domain (Extended arm). 5 tandem repeats follow at residues 279–291 (DPED…WDER), 296–308 (DPDA…WDED), 315–327 (DEEA…WLDD), 334–346 (DPDA…WDED), and 349–359 (GEWEAPQIANP). 2 4 X approximate repeats regions span residues 279-346 (DPED…WDED) and 349-406 (GEWE…IPNP). Over residues 324–347 (WLDDEPEYIPDPDAEKPEDWDEDM) the composition is skewed to acidic residues. Positions 327–360 (DEPEYIPDPDAEKPEDWDEDMDGEWEAPQIANPK) are interaction with PPIB. C361 and C367 are disulfide-bonded. A run of 3 repeats spans residues 368-378 (GVWQRPMIDNP), 382-392 (GKWKPPMIDNP), and 396-406 (GIWKPRKIPNP). E426 is an an alpha-D-glucoside binding site. D437 lines the Ca(2+) pocket. The helical transmembrane segment at 483–503 (WLWVVYILTVALPVFLVILFC) threads the bilayer. 2 S-palmitoyl cysteine lipidation sites follow: C503 and C504. Over 504-591 (CSGKKQSNAM…SPRNRKPRRE (88 aa)) the chain is Cytoplasmic. The interval 504–591 (CSGKKQSNAM…SPRNRKPRRE (88 aa)) is sufficient to mediate interaction with SGIP1. Over residues 514 to 539 (EYKKTDAPQPDVKDEEGKEEEKNKRD) the composition is skewed to basic and acidic residues. Residues 514–591 (EYKKTDAPQP…SPRNRKPRRE (78 aa)) form a disordered region. A Phosphoserine modification is found at S553. Acidic residues predominate over residues 555-568 (AEEDGVTGSQDEED). The residue at position 561 (T561) is a Phosphothreonine. A Phosphoserine; by MAPK3 modification is found at S563. S582 is modified (phosphoserine).

The protein belongs to the calreticulin family. In terms of assembly, interacts with MAPK3/ERK1. Interacts with KCNH2. Associates with ribosomes. The palmitoylated form interacts with the ribosome-translocon complex component SSR1, promoting efficient folding of glycoproteins. Interacts with SERPINA2P/SERPINA2 and with the S and Z variants of SERPINA1. Interacts with SGIP1; involved in negative regulation of endocytosis. Interacts with PPIB. Interacts with SMIM22. Interacts with TMX2. Interacts with TMEM35A/NACHO. Interacts with CHRNA7. Interacts with reticulophagy regulators RETREG2 and RETREG3. Interacts with DNM1L; may form part of a larger protein complex at the ER-mitochondrial interface during mitochondrial fission. Interacts with ADAM7. Phosphorylated at Ser-563 by MAPK3/ERK1. Phosphorylation by MAPK3/ERK1 increases its association with ribosomes. In terms of processing, palmitoylation by DHHC6 leads to the preferential localization to the perinuclear rough ER. It mediates the association of calnexin with the ribosome-translocon complex (RTC) which is required for efficient folding of glycosylated proteins. Post-translationally, ubiquitinated, leading to proteasomal degradation. Probably ubiquitinated by ZNRF4. In terms of tissue distribution, expressed in sperm (at protein level).

It localises to the endoplasmic reticulum membrane. The protein localises to the mitochondrion membrane. Its subcellular location is the melanosome membrane. Its function is as follows. Calcium-binding protein that interacts with newly synthesized monoglucosylated glycoproteins in the endoplasmic reticulum. It may act in assisting protein assembly and/or in the retention within the ER of unassembled protein subunits. It seems to play a major role in the quality control apparatus of the ER by the retention of incorrectly folded proteins. Associated with partial T-cell antigen receptor complexes that escape the ER of immature thymocytes, it may function as a signaling complex regulating thymocyte maturation. Additionally it may play a role in receptor-mediated endocytosis at the synapse. The protein is Calnexin (Canx) of Mus musculus (Mouse).